The primary structure comprises 687 residues: Tripartite terminase subunit 3 (687 aa).

The segment at 67 to 91 (HHPATPTSANPDVGTPRPSEDNVPA) is disordered. The short motif at 221–228 (IPRRHGKT) is the Walker A motif element. A Walker B motif motif is present at residues 316–321 (LLYVDE). The active-site For ATPase activity is the Glu321. Catalysis depends on for nuclease activity residues Asp476, Glu550, and Asp662.

This sequence belongs to the herpesviridae TRM3 protein family. Interacts with the terminase subunits TRM1 and TRM2. Interacts with portal protein.

The protein resides in the host nucleus. Functionally, component of the molecular motor that translocates viral genomic DNA in empty capsid during DNA packaging. Forms a tripartite terminase complex together with TRM1 and TRM2 in the host cytoplasm. Once the complex reaches the host nucleus, it interacts with the capsid portal vertex. This portal forms a ring in which genomic DNA is translocated into the capsid. TRM3 carries an RNase H-like nuclease activity that plays an important role for the cleavage of concatemeric viral DNA into unit length genomes. This chain is Tripartite terminase subunit 3, found in Human herpesvirus 8 type P (isolate GK18) (HHV-8).